The primary structure comprises 257 residues: uncharacterized protein (257 aa).

The first 22 residues, 1–22 (MRYLKRLSWYISILILIVVIAG), serve as a signal peptide directing secretion. C23 carries the N-palmitoyl cysteine lipid modification. Residue C23 is the site of S-diacylglycerol cysteine attachment.

Belongs to the staphylococcal tandem lipoprotein family.

It localises to the cell membrane. This is an uncharacterized protein from Staphylococcus aureus (strain N315).